Here is a 221-residue protein sequence, read N- to C-terminus: Putative gene 53 protein (221 aa).

This chain is Putative gene 53 protein (53), found in Bacillus phage SP01 (Bacteriophage SP01).